We begin with the raw amino-acid sequence, 310 residues long: tRNA dimethylallyltransferase (310 aa).

Residue 14-21 participates in ATP binding; that stretch reads GPTASGKS. 16–21 is a substrate binding site; sequence TASGKS. Interaction with substrate tRNA regions lie at residues 39–42 and 163–167; these read DSMQ and QRIVR.

Belongs to the IPP transferase family. Monomer. It depends on Mg(2+) as a cofactor.

The enzyme catalyses adenosine(37) in tRNA + dimethylallyl diphosphate = N(6)-dimethylallyladenosine(37) in tRNA + diphosphate. Its function is as follows. Catalyzes the transfer of a dimethylallyl group onto the adenine at position 37 in tRNAs that read codons beginning with uridine, leading to the formation of N6-(dimethylallyl)adenosine (i(6)A). The polypeptide is tRNA dimethylallyltransferase (Brucella melitensis biotype 2 (strain ATCC 23457)).